The chain runs to 228 residues: Cytochrome c oxidase subunit 2 (228 aa).

Over 1-26 the chain is Mitochondrial intermembrane; sequence MATWNNLNLQNGASPLMEQIIFFHDH. The helical transmembrane segment at 27-48 threads the bilayer; sequence TLIILIMITILVGYLMINLFFN. Over 49-62 the chain is Mitochondrial matrix; it reads KYINRFLLEGQMIE. Residues 63–82 traverse the membrane as a helical segment; that stretch reads LIWTILPAITLIFIALPSLR. Residues 83–228 lie on the Mitochondrial intermembrane side of the membrane; that stretch reads LLYLLDELNN…FIKWINNYSS (146 aa). Residues H161, C196, E198, C200, H204, and M207 each contribute to the Cu cation site. Position 198 (E198) interacts with Mg(2+).

The protein belongs to the cytochrome c oxidase subunit 2 family. In terms of assembly, component of the cytochrome c oxidase (complex IV, CIV), a multisubunit enzyme composed of a catalytic core of 3 subunits and several supernumerary subunits. The complex exists as a monomer or a dimer and forms supercomplexes (SCs) in the inner mitochondrial membrane with ubiquinol-cytochrome c oxidoreductase (cytochrome b-c1 complex, complex III, CIII). Cu cation serves as cofactor.

Its subcellular location is the mitochondrion inner membrane. The catalysed reaction is 4 Fe(II)-[cytochrome c] + O2 + 8 H(+)(in) = 4 Fe(III)-[cytochrome c] + 2 H2O + 4 H(+)(out). Its function is as follows. Component of the cytochrome c oxidase, the last enzyme in the mitochondrial electron transport chain which drives oxidative phosphorylation. The respiratory chain contains 3 multisubunit complexes succinate dehydrogenase (complex II, CII), ubiquinol-cytochrome c oxidoreductase (cytochrome b-c1 complex, complex III, CIII) and cytochrome c oxidase (complex IV, CIV), that cooperate to transfer electrons derived from NADH and succinate to molecular oxygen, creating an electrochemical gradient over the inner membrane that drives transmembrane transport and the ATP synthase. Cytochrome c oxidase is the component of the respiratory chain that catalyzes the reduction of oxygen to water. Electrons originating from reduced cytochrome c in the intermembrane space (IMS) are transferred via the dinuclear copper A center (CU(A)) of subunit 2 and heme A of subunit 1 to the active site in subunit 1, a binuclear center (BNC) formed by heme A3 and copper B (CU(B)). The BNC reduces molecular oxygen to 2 water molecules using 4 electrons from cytochrome c in the IMS and 4 protons from the mitochondrial matrix. The chain is Cytochrome c oxidase subunit 2 (COII) from Yponomeuta malinellus (European small ermine moth).